We begin with the raw amino-acid sequence, 632 residues long: Mediator of RNA polymerase II transcription subunit 17 (632 aa).

Disordered stretches follow at residues 1–21 (MSDSFTVSLRPIREKRDRPDS) and 50–72 (EDKHKDHWEEDDEGDKESTDLET). The segment covering 11–21 (PIREKRDRPDS) has biased composition (basic and acidic residues). The span at 58 to 72 (EEDDEGDKESTDLET) shows a compositional bias: acidic residues.

The protein belongs to the Mediator complex subunit 17 family. In terms of assembly, component of the Mediator complex.

It localises to the nucleus. Component of the Mediator complex, a coactivator involved in the regulated transcription of nearly all RNA polymerase II-dependent genes. Mediator functions as a bridge to convey information from gene-specific regulatory proteins to the basal RNA polymerase II transcription machinery. Mediator is recruited to promoters by direct interactions with regulatory proteins and serves as a scaffold for the assembly of a functional preinitiation complex with RNA polymerase II and the general transcription factors. This Emericella nidulans (strain FGSC A4 / ATCC 38163 / CBS 112.46 / NRRL 194 / M139) (Aspergillus nidulans) protein is Mediator of RNA polymerase II transcription subunit 17 (srb4).